The sequence spans 449 residues: Mannan endo-1,6-alpha-mannosidase DCW1 (449 aa).

Positions 1 to 21 (MLVNKVIGLLGVLFATRFTNA) are cleaved as a signal peptide. N-linked (GlcNAc...) asparagine glycans are attached at residues Asn-34, Asn-84, Asn-109, Asn-133, Asn-203, Asn-225, Asn-240, Asn-265, Asn-281, Asn-337, Asn-362, and Asn-420. Gly-428 is lipidated: GPI-anchor amidated glycine. A propeptide spans 429 to 449 (AGIITAVIGISIVACALWLVF) (removed in mature form).

Belongs to the glycosyl hydrolase 76 family.

The protein localises to the cell membrane. It carries out the reaction Random hydrolysis of (1-&gt;6)-alpha-D-mannosidic linkages in unbranched (1-&gt;6)-mannans.. Required for normal synthesis of the cell wall. The polypeptide is Mannan endo-1,6-alpha-mannosidase DCW1 (DCW1) (Saccharomyces cerevisiae (strain ATCC 204508 / S288c) (Baker's yeast)).